Reading from the N-terminus, the 447-residue chain is Exodeoxyribonuclease 7 large subunit (447 aa).

The protein belongs to the XseA family. In terms of assembly, heterooligomer composed of large and small subunits.

Its subcellular location is the cytoplasm. It carries out the reaction Exonucleolytic cleavage in either 5'- to 3'- or 3'- to 5'-direction to yield nucleoside 5'-phosphates.. In terms of biological role, bidirectionally degrades single-stranded DNA into large acid-insoluble oligonucleotides, which are then degraded further into small acid-soluble oligonucleotides. The polypeptide is Exodeoxyribonuclease 7 large subunit (Pediococcus pentosaceus (strain ATCC 25745 / CCUG 21536 / LMG 10740 / 183-1w)).